Here is a 140-residue protein sequence, read N- to C-terminus: Large ribosomal subunit protein bL17 (140 aa).

This sequence belongs to the bacterial ribosomal protein bL17 family. In terms of assembly, part of the 50S ribosomal subunit. Contacts protein L32.

This chain is Large ribosomal subunit protein bL17, found in Methylobacterium nodulans (strain LMG 21967 / CNCM I-2342 / ORS 2060).